The sequence spans 224 residues: (S)-2-haloacid dehalogenase H-109 (224 aa).

Catalysis depends on aspartate 10, which acts as the Nucleophile. Residues 11–12 (LY), arginine 41, and 118–119 (SN) contribute to the an (S)-2-haloacid site. Positions 175 to 180 (SSNSWD) are important for catalytic activity.

Belongs to the HAD-like hydrolase superfamily. S-2-haloalkanoic acid dehalogenase family.

It catalyses the reaction an (S)-2-haloacid + H2O = a (2R)-2-hydroxycarboxylate + a halide anion + H(+). The enzyme catalyses (S)-2-chloropropanoate + H2O = (R)-lactate + chloride + H(+). In terms of biological role, catalyzes the hydrolytic dehalogenation of small (S)-2-haloalkanoic acids to yield the corresponding (R)-2-hydroxyalkanoic acids. Acts on acids of short chain lengths, C(2) to C(4), with inversion of configuration at C-2. Active with 2-halogenated carboxylic acids and converts only the S-isomer (or L-isomer) of 2-chloropropionic acid with inversion of configuration to produce R-lactate (or D-isomer). This Pseudomonas putida (Arthrobacter siderocapsulatus) protein is (S)-2-haloacid dehalogenase H-109.